Reading from the N-terminus, the 235-residue chain is High mobility group protein 1.2 (235 aa).

Residues 1-34 (MNSGYSANIFPSSSSPTLYQSHQLQPNPSATMYQ) are compositionally biased toward polar residues. Positions 1–47 (MNSGYSANIFPSSSSPTLYQSHQLQPNPSATMYQATPRDMGKPPVRG) are disordered. DNA-binding regions (HMG box) lie at residues 47–117 (GKTS…AAYG) and 135–203 (PKRA…RNYK).

This sequence belongs to the HMGB family.

It is found in the nucleus. The chain is High mobility group protein 1.2 (hmg-1.2) from Caenorhabditis elegans.